A 154-amino-acid chain; its full sequence is Ubiquitin-conjugating enzyme E2 L3 (154 aa).

Residues Ala2 to Glu149 enclose the UBC core domain. The Glycyl thioester intermediate role is filled by Cys86. Position 131 is an N6-acetyllysine (Lys131).

This sequence belongs to the ubiquitin-conjugating enzyme family. In terms of assembly, interacts with PRKN; involved in ubiquitination and degradation of misfolded proteins. Interacts with UBE3A. Interacts with CCNB1IP1, CBL, ZAP70, RNF19A, RNF19B and RNF144B. Interacts with ARIH1. Interacts with ARIH2 (via RING-type 1). Interacts with NCOA1; they functionally interact to regulate progesterone receptor transcriptional activity. Interacts with NDFIP1 (via N-terminus); the interaction mediates recruitment of UBE2L3 to ITCH and causes MAP3K7 ubiquitination. Ubiquitinated. The alteration of UBE2L3 protein levels during the S-phase of the cell cycle is due to ubiquitin-dependent proteasomal degradation. Autoubiquitinated in vitro.

The protein resides in the nucleus. The protein localises to the cytoplasm. The catalysed reaction is S-ubiquitinyl-[E1 ubiquitin-activating enzyme]-L-cysteine + [E2 ubiquitin-conjugating enzyme]-L-cysteine = [E1 ubiquitin-activating enzyme]-L-cysteine + S-ubiquitinyl-[E2 ubiquitin-conjugating enzyme]-L-cysteine.. Its pathway is protein modification; protein ubiquitination. Its function is as follows. Ubiquitin-conjugating enzyme E2 that specifically acts with HECT-type and RBR family E3 ubiquitin-protein ligases. Does not function with most RING-containing E3 ubiquitin-protein ligases because it lacks intrinsic E3-independent reactivity with lysine: in contrast, it has activity with the RBR family E3 enzymes, such as PRKN, RNF31 and ARIH1, that function like RING-HECT hybrids. Accepts ubiquitin from the E1 complex and catalyzes its covalent attachment to other proteins. Mediates ubiquitination by the CUL9-RBX1 complex. In vitro catalyzes 'Lys-11'-linked polyubiquitination. Involved in the selective degradation of short-lived and abnormal proteins. Down-regulated during the S-phase it is involved in progression through the cell cycle. Regulates nuclear hormone receptors transcriptional activity. May play a role in myelopoiesis. The chain is Ubiquitin-conjugating enzyme E2 L3 (UBE2L3) from Bos taurus (Bovine).